The primary structure comprises 505 residues: Argininosuccinate lyase (505 aa).

This sequence belongs to the lyase 1 family. Argininosuccinate lyase subfamily.

The protein resides in the cytoplasm. It catalyses the reaction 2-(N(omega)-L-arginino)succinate = fumarate + L-arginine. It functions in the pathway amino-acid biosynthesis; L-arginine biosynthesis; L-arginine from L-ornithine and carbamoyl phosphate: step 3/3. The polypeptide is Argininosuccinate lyase (Rhodococcoides fascians (Rhodococcus fascians)).